Reading from the N-terminus, the 514-residue chain is Cytochrome P450 monooxygenase aneD (514 aa).

A helical transmembrane segment spans residues 6–26 (ICTLLAVIATTSLGLLFLSII). 3 N-linked (GlcNAc...) asparagine glycosylation sites follow: N113, N261, and N347. C424 lines the heme pocket.

Belongs to the cytochrome P450 family. Heme serves as cofactor.

The protein localises to the membrane. The catalysed reaction is asperaculane D + reduced [NADPH--hemoprotein reductase] + O2 = asperaculane E + oxidized [NADPH--hemoprotein reductase] + H2O + H(+). Its pathway is secondary metabolite biosynthesis. Functionally, cytochrome P450 monooxygenase; part of the gene cluster that mediates the biosynthesis of aculenes, a unique type of norsesquiterpenes that contain a nordaucane skeleton linked to an L-proline moiety and are of mixed biosynthetic origin. The pathway begins with the synthesis of dauca-4,7-diene by the terpene cyclase aneC using farnesyl pyrophosphate (FPP) as substrate. The cytochrome P450 monooxygenase aneF then performs the initial oxidation at C-12 of dauca-4,7-diene to yield asperaculane D. Asperaculane D is substrate of the cytochrome P450 monooxygenase aneD for C-10 hydroxylation to yield asperaculane E. The cytochrome P450 monooxygenase aneG then converts asperaculane E into aculene D via C-2 oxidation. The monomodular nonribosomal peptide synthtase aneB adenylates L-proline and the thiohydrolase aneE transfers this activated L-proline derivative to aculenes D and C to produce respectively aculenes B and A. The dioxygenase aneA converts aculene D into aculene C, and aculene B into aculene A by introducing the 5,6-alkene moiety. Asperculanes A, B, C and F, as well as 14-prolyl asperculane C, might be shunt products of the pathway. In Aspergillus aculeatus (strain ATCC 16872 / CBS 172.66 / WB 5094), this protein is Cytochrome P450 monooxygenase aneD.